Consider the following 260-residue polypeptide: E3 ubiquitin-protein ligase SRFP1 (260 aa).

Residues 11 to 80 form a CHY-type zinc finger; the sequence is FGRMGFGCKH…VAQVCYNCGV (70 aa). Residues cysteine 18, histidine 20, cysteine 31, cysteine 32, cysteine 38, cysteine 41, histidine 42, histidine 50, cysteine 62, cysteine 65, cysteine 75, cysteine 78, cysteine 87, cysteine 90, histidine 103, cysteine 104, cysteine 107, cysteine 110, histidine 120, cysteine 121, cysteine 124, cysteine 127, histidine 136, and cysteine 138 each coordinate Zn(2+). The segment at 82 to 146 adopts a CTCHY-type zinc-finger fold; it reads MGEYFCSACK…CCIENSMKNN (65 aa). The segment at 147–190 adopts an RING-type; atypical zinc-finger fold; sequence CPICYEYLFDSLRETSVLRCGHTMHLQCFHEMLKHDKFSCPICS.

As to expression, expressed in roots, leaves, nodes and panicles.

The protein localises to the nucleus. The protein resides in the cytoplasm. The enzyme catalyses S-ubiquitinyl-[E2 ubiquitin-conjugating enzyme]-L-cysteine + [acceptor protein]-L-lysine = [E2 ubiquitin-conjugating enzyme]-L-cysteine + N(6)-ubiquitinyl-[acceptor protein]-L-lysine.. It functions in the pathway protein modification; protein ubiquitination. Possesses E3 ubiquitin-protein ligase activity in vitro. Possesses transactivation activity in yeast cells. May modulate abiotic stress responses by negatively regulating antioxidant enzymes-mediated reactive oxygen species (ROS) removal. The chain is E3 ubiquitin-protein ligase SRFP1 from Oryza sativa subsp. japonica (Rice).